A 143-amino-acid polypeptide reads, in one-letter code: Sporulation-specific cell division protein SsgB (143 aa).

Belongs to the SsgA family. In terms of assembly, interacts with SsgA. Interacts with FtsZ (via N-terminus).

The protein localises to the cell septum. Involved in sporulation-specific cell division. Required for early stages of sporulation. Important in the process of growth cessation prior to sporulation-specific cell division. Recruits cell division protein FtsZ to the future septum sites and tethers the contractile ring structure (Z ring) to the cytoplasmic membrane during sporulation. Stimulates polymerization and filament length of FtsZ in vitro. The protein is Sporulation-specific cell division protein SsgB of Salinispora tropica (strain ATCC BAA-916 / DSM 44818 / JCM 13857 / NBRC 105044 / CNB-440).